The sequence spans 197 residues: Holliday junction branch migration complex subunit RuvA (197 aa).

The tract at residues M1–A64 is domain I. The segment at S65 to P141 is domain II. A flexible linker region spans residues P141–K145. Residues P146–G197 form a domain III region.

The protein belongs to the RuvA family. Homotetramer. Forms an RuvA(8)-RuvB(12)-Holliday junction (HJ) complex. HJ DNA is sandwiched between 2 RuvA tetramers; dsDNA enters through RuvA and exits via RuvB. An RuvB hexamer assembles on each DNA strand where it exits the tetramer. Each RuvB hexamer is contacted by two RuvA subunits (via domain III) on 2 adjacent RuvB subunits; this complex drives branch migration. In the full resolvosome a probable DNA-RuvA(4)-RuvB(12)-RuvC(2) complex forms which resolves the HJ.

The protein localises to the cytoplasm. Its function is as follows. The RuvA-RuvB-RuvC complex processes Holliday junction (HJ) DNA during genetic recombination and DNA repair, while the RuvA-RuvB complex plays an important role in the rescue of blocked DNA replication forks via replication fork reversal (RFR). RuvA specifically binds to HJ cruciform DNA, conferring on it an open structure. The RuvB hexamer acts as an ATP-dependent pump, pulling dsDNA into and through the RuvAB complex. HJ branch migration allows RuvC to scan DNA until it finds its consensus sequence, where it cleaves and resolves the cruciform DNA. This chain is Holliday junction branch migration complex subunit RuvA, found in Anaeromyxobacter sp. (strain Fw109-5).